The sequence spans 190 residues: Double zinc ribbon protein MJ0416 (190 aa).

The segment at 134–183 adopts a DZANK-type zinc-finger fold; that stretch reads CPNCNNYISDSWKYCAHCGAKLKEEEEEVLRCPNCKRPVQPEWIVCPYCG.

The sequence is that of Double zinc ribbon protein MJ0416 from Methanocaldococcus jannaschii (strain ATCC 43067 / DSM 2661 / JAL-1 / JCM 10045 / NBRC 100440) (Methanococcus jannaschii).